A 132-amino-acid chain; its full sequence is Small ribosomal subunit protein uS17c (132 aa).

Positions Met-1–Val-11 are enriched in low complexity. Disordered stretches follow at residues Met-1–Ala-23 and Pro-104–Glu-132. Residues Met-1–Ala-31 constitute a chloroplast transit peptide. Residues Ser-122 to Glu-132 show a composition bias toward acidic residues.

Belongs to the universal ribosomal protein uS17 family. As to quaternary structure, part of the 30S ribosomal subunit.

The protein localises to the plastid. It localises to the chloroplast. Its function is as follows. One of the primary rRNA binding proteins, it binds specifically to the 5'-end of 16S ribosomal RNA. Functionally, in the hcf60 mutation the Activator tag is inserted 17 base pars upstream of the initiation codon. This mutation is seedling lethal, due to plastid ribosome insufficiency. However under non-light stressed conditions photosynthesis and oxygen evolution can occur. The chain is Small ribosomal subunit protein uS17c (RPS17) from Zea mays (Maize).